A 173-amino-acid chain; its full sequence is Peptide methionine sulfoxide reductase MsrA (173 aa).

The active site involves cysteine 10.

It belongs to the MsrA Met sulfoxide reductase family.

It carries out the reaction L-methionyl-[protein] + [thioredoxin]-disulfide + H2O = L-methionyl-(S)-S-oxide-[protein] + [thioredoxin]-dithiol. It catalyses the reaction [thioredoxin]-disulfide + L-methionine + H2O = L-methionine (S)-S-oxide + [thioredoxin]-dithiol. Its function is as follows. Has an important function as a repair enzyme for proteins that have been inactivated by oxidation. Catalyzes the reversible oxidation-reduction of methionine sulfoxide in proteins to methionine. The chain is Peptide methionine sulfoxide reductase MsrA from Psychrobacter arcticus (strain DSM 17307 / VKM B-2377 / 273-4).